The primary structure comprises 211 residues: Putative 3-methyladenine DNA glycosylase (211 aa).

Belongs to the DNA glycosylase MPG family.

The protein is Putative 3-methyladenine DNA glycosylase of Granulibacter bethesdensis (strain ATCC BAA-1260 / CGDNIH1).